A 77-amino-acid polypeptide reads, in one-letter code: Small ribosomal subunit protein bS16 (77 aa).

The protein belongs to the bacterial ribosomal protein bS16 family.

In Helicobacter hepaticus (strain ATCC 51449 / 3B1), this protein is Small ribosomal subunit protein bS16.